The primary structure comprises 363 residues: 1,2-Dihydrovomilenine reductase (363 aa).

In terms of domain architecture, Enoyl reductase (ER) spans glycine 24–isoleucine 352. Cysteine 51 is a binding site for Zn(2+). NADP(+) is bound at residue serine 53. Residues aspartate 54, glutamate 74, cysteine 104, cysteine 107, cysteine 110, and cysteine 118 each coordinate Zn(2+). NADP(+) contacts are provided by leucine 193, glycine 195, leucine 196, serine 215, threonine 216, serine 217, lysine 220, lysine 221, valine 278, alanine 280, threonine 302, and arginine 349.

Belongs to the zinc-containing alcohol dehydrogenase family. Class-P subfamily. In terms of assembly, homodimer. Requires Zn(2+) as cofactor. As to expression, mainly expressed in mature roots and, to a lower extent, in stems and leaves.

It is found in the cytoplasm. It catalyses the reaction 17-O-acetylnorajmaline + NADP(+) = (2R)-1,2-dihydrovomilenine + NADPH + 2 H(+). The enzyme catalyses (20S)-19,20-dihydrovomilenine + NADP(+) = vomilenine + NADPH + H(+). The protein operates within alkaloid biosynthesis; ajmaline biosynthesis. Its function is as follows. Alcohol dehydrogenase involved in the biosynthesis of ajmaline-type monoterpenoid indole alkaloids (MIAs) natural products, important plant-derived pharmaceuticals used in the therapy of heart disorders. Catalyzes the conversion of 1,2-dihydrovomilenine to 17-O-acetylnorajmaline, an intermediate chemical in the biosynthesis of ajmaline. Also able, with a lower efficiency, to convert vomilenine into 19,20-dihydrovomilenine. This Rauvolfia serpentina (Serpentine wood) protein is 1,2-Dihydrovomilenine reductase.